Here is a 272-residue protein sequence, read N- to C-terminus: Putative phosphatase BU028/BU029 (272 aa).

Asp8 serves as the catalytic Nucleophile. Residue Asp8 coordinates Mg(2+). Position 9 (Leu9) interacts with phosphate. Asp10 contacts Mg(2+). Phosphate contacts are provided by residues Ser42 to Gly43 and Lys191. Residue Asp214 coordinates Mg(2+). Asn217 provides a ligand contact to phosphate.

The protein belongs to the HAD-like hydrolase superfamily. Cof family. Mg(2+) is required as a cofactor.

The protein is Putative phosphatase BU028/BU029 of Buchnera aphidicola subsp. Acyrthosiphon pisum (strain APS) (Acyrthosiphon pisum symbiotic bacterium).